The following is a 612-amino-acid chain: Large ribosomal subunit assembly factor BipA (612 aa).

The tr-type G domain maps to 5-200 (NDLRNIAIIA…TIIKHVPAPV (196 aa)). GTP contacts are provided by residues 17–22 (DHGKTT) and 130–133 (NKID).

The protein belongs to the TRAFAC class translation factor GTPase superfamily. Classic translation factor GTPase family. BipA subfamily. In terms of assembly, monomer.

Its subcellular location is the cytoplasm. The enzyme catalyses GTP + H2O = GDP + phosphate + H(+). Its function is as follows. A 50S ribosomal subunit assembly protein with GTPase activity, required for 50S subunit assembly at low temperatures, may also play a role in translation. Binds GTP and analogs. Binds the 70S ribosome between the 30S and 50S subunits, in a similar position as ribosome-bound EF-G; it contacts a number of ribosomal proteins, both rRNAs and the A-site tRNA. This chain is Large ribosomal subunit assembly factor BipA, found in Bacillus subtilis (strain 168).